The following is a 415-amino-acid chain: Squalene synthase 2 (415 aa).

2 helical membrane-spanning segments follow: residues 281–301 and 392–412; these read AIFRFCAIPQIMSIGTLALCY and LIVILFIILAILYAYLSSNLP.

The protein belongs to the phytoene/squalene synthase family. Mg(2+) serves as cofactor. Requires Mn(2+) as cofactor.

The protein resides in the endoplasmic reticulum membrane. The enzyme catalyses 2 (2E,6E)-farnesyl diphosphate + NADH + H(+) = squalene + 2 diphosphate + NAD(+). It carries out the reaction 2 (2E,6E)-farnesyl diphosphate + NADPH + H(+) = squalene + 2 diphosphate + NADP(+). The protein operates within terpene metabolism; lanosterol biosynthesis; lanosterol from farnesyl diphosphate: step 1/3. In terms of biological role, component of the triterpene saponins (e.g. ginsenosides or panaxosides) and phytosterols biosynthetic pathways. Catalyzes the biosynthesis of squalene. This is Squalene synthase 2 from Panax ginseng (Korean ginseng).